A 519-amino-acid polypeptide reads, in one-letter code: MTDLQQVVAHSFAALAASRTTFRAQLKAREIGIISSVSFGVAQVSGLANVASEEVLKFSGDIYGIAFNVDQDSIGVVLLGDYWQLQSGDEVERTGRVMDVAVGLGLLGRVIDPLGRPLDDKGPIESSERLPVERPAAPIMDRAPVTVPLQTGLKVIDALIPIGRGQRELILGDRQTGKTTIAIDTILNQHDQNVLCVYCAIGQRASAVAKTIAILKAKGALDYTLVMVSEGNAPPGFAYIAPYAATSIAEYFMEKGRDVLIVYDDLTQHARAYRELSLLLRRPPGREAFPGDIFYIHSRLLERATCLKQRHKGGSLTALPIIETEAQNISAYIPTNLISITDGQIYLSPTLFELGILPAVDVGRSVSRVGGKAQRPMYRAVAANLKLTYAQFEELETFARFGARLDQNSQDIITNGRRIRASLKQPQSSPMTVLEQITVLIALTEKLFDTVPLLKMREAEQALCLATTELPEDFLSRFNSAKILSDDDRNRIIDIARITLAPFQSPPDEDNGITSTPSN.

An ATP-binding site is contributed by 172 to 179 (GDRQTGKT).

This sequence belongs to the ATPase alpha/beta chains family. F-type ATPases have 2 components, CF(1) - the catalytic core - and CF(0) - the membrane proton channel. CF(1) has five subunits: alpha(3), beta(3), gamma(1), delta(1), epsilon(1). CF(0) has three main subunits: a(1), b(2) and c(9-12). The alpha and beta chains form an alternating ring which encloses part of the gamma chain. CF(1) is attached to CF(0) by a central stalk formed by the gamma and epsilon chains, while a peripheral stalk is formed by the delta and b chains.

The protein resides in the cell inner membrane. It catalyses the reaction ATP + H2O + 4 H(+)(in) = ADP + phosphate + 5 H(+)(out). Its function is as follows. Produces ATP from ADP in the presence of a proton gradient across the membrane. The alpha chain is a regulatory subunit. The protein is ATP synthase subunit alpha 1 of Psychromonas ingrahamii (strain DSM 17664 / CCUG 51855 / 37).